Here is a 199-residue protein sequence, read N- to C-terminus: ATP-dependent Clp protease proteolytic subunit (199 aa).

S97 serves as the catalytic Nucleophile. The active site involves H122.

Belongs to the peptidase S14 family. In terms of assembly, fourteen ClpP subunits assemble into 2 heptameric rings which stack back to back to give a disk-like structure with a central cavity, resembling the structure of eukaryotic proteasomes.

The protein resides in the cytoplasm. It carries out the reaction Hydrolysis of proteins to small peptides in the presence of ATP and magnesium. alpha-casein is the usual test substrate. In the absence of ATP, only oligopeptides shorter than five residues are hydrolyzed (such as succinyl-Leu-Tyr-|-NHMec, and Leu-Tyr-Leu-|-Tyr-Trp, in which cleavage of the -Tyr-|-Leu- and -Tyr-|-Trp bonds also occurs).. Functionally, cleaves peptides in various proteins in a process that requires ATP hydrolysis. Has a chymotrypsin-like activity. Plays a major role in the degradation of misfolded proteins. This chain is ATP-dependent Clp protease proteolytic subunit, found in Geotalea uraniireducens (strain Rf4) (Geobacter uraniireducens).